The following is a 254-amino-acid chain: Dolichol-phosphate mannosyltransferase subunit 1 (254 aa).

10 residues coordinate GDP-alpha-D-mannose: proline 25, tyrosine 27, glutamate 29, valine 56, aspartate 58, aspartate 111, alanine 112, aspartate 113, arginine 140, and arginine 227. A Mg(2+)-binding site is contributed by aspartate 113. Aspartate 113 provides a ligand contact to Mn(2+).

This sequence belongs to the glycosyltransferase 2 family. As to quaternary structure, component of the dolichol-phosphate mannose (DPM) synthase complex composed of dpm1, dpm2 and dpm3. The cofactor is Mg(2+). Requires Mn(2+) as cofactor. Ca(2+) is required as a cofactor.

The protein localises to the endoplasmic reticulum. It carries out the reaction a di-trans,poly-cis-dolichyl phosphate + GDP-alpha-D-mannose = a di-trans,poly-cis-dolichyl beta-D-mannosyl phosphate + GDP. It functions in the pathway protein modification; protein glycosylation. Functionally, transfers mannose from GDP-mannose to dolichol monophosphate to form dolichol phosphate mannose (Dol-P-Man) which is the mannosyl donor in pathways leading to N-glycosylation, glycosyl phosphatidylinositol membrane anchoring, and O-mannosylation of proteins; catalytic subunit of the dolichol-phosphate mannose (DPM) synthase complex. In Dictyostelium discoideum (Social amoeba), this protein is Dolichol-phosphate mannosyltransferase subunit 1 (dpm1).